The sequence spans 102 residues: NADH-quinone oxidoreductase subunit K (102 aa).

A run of 3 helical transmembrane segments spans residues 5 to 25, 30 to 50, and 63 to 83; these read ALTG…FGVL, ILFQ…AFIA, and MFVL…ALFL.

It belongs to the complex I subunit 4L family. As to quaternary structure, NDH-1 is composed of 14 different subunits. Subunits NuoA, H, J, K, L, M, N constitute the membrane sector of the complex.

It localises to the cell inner membrane. It carries out the reaction a quinone + NADH + 5 H(+)(in) = a quinol + NAD(+) + 4 H(+)(out). Its function is as follows. NDH-1 shuttles electrons from NADH, via FMN and iron-sulfur (Fe-S) centers, to quinones in the respiratory chain. The immediate electron acceptor for the enzyme in this species is believed to be ubiquinone. Couples the redox reaction to proton translocation (for every two electrons transferred, four hydrogen ions are translocated across the cytoplasmic membrane), and thus conserves the redox energy in a proton gradient. In Rhodopseudomonas palustris (strain BisB18), this protein is NADH-quinone oxidoreductase subunit K.